Reading from the N-terminus, the 2463-residue chain is Protein TIC 214 (2463 aa).

6 helical membrane passes run 18–38 (VGLY…LFLL), 60–80 (FFTG…HLAL), 86–106 (ILLL…SGQW), 127–147 (LVFL…GRPM), 170–190 (FVGW…VFVW), and 297–317 (LFSI…PLLY). Residues 326–441 (QLQRKLSNET…AARAMQEAYK (116 aa)) are a coiled coil. 5 disordered regions span residues 792-841 (AVPK…RKVN), 1230-1249 (SIQK…GPKK), 1393-1417 (SGGR…EQDF), 2116-2136 (EEEK…KLKK), and 2162-2187 (KQRA…RKVQ). Residues 794–830 (PKKKKKISKSKQKNVKSKQKNVKSKQKNVKSKQKNVK) are compositionally biased toward basic residues. Basic and acidic residues-rich tracts occupy residues 832–841 (KQNEIKRKVN), 1231–1249 (IQKD…GPKK), and 1397–1417 (ETPE…EQDF). Positions 2049-2192 (WDALVASLKQ…KRKVQVQENK (144 aa)) form a coiled coil. The span at 2124 to 2136 (KRKKERKKEKLKK) shows a compositional bias: basic residues.

Belongs to the TIC214 family. As to quaternary structure, part of the Tic complex.

It localises to the plastid. The protein localises to the chloroplast inner membrane. Its function is as follows. Involved in protein precursor import into chloroplasts. May be part of an intermediate translocation complex acting as a protein-conducting channel at the inner envelope. In Oenothera elata subsp. hookeri (Hooker's evening primrose), this protein is Protein TIC 214.